The following is a 162-amino-acid chain: Small ribosomal subunit protein uS5 (162 aa).

Residues 7 to 70 (EEKMILIRRT…YARRNMVEVP (64 aa)) form the S5 DRBM domain.

Belongs to the universal ribosomal protein uS5 family. In terms of assembly, part of the 30S ribosomal subunit. Contacts proteins S4 and S8.

In terms of biological role, with S4 and S12 plays an important role in translational accuracy. Functionally, located at the back of the 30S subunit body where it stabilizes the conformation of the head with respect to the body. This is Small ribosomal subunit protein uS5 (rpsE) from Thermus thermophilus (strain ATCC BAA-163 / DSM 7039 / HB27).